The sequence spans 235 residues: Voltage-gated hydrogen channel 1 (235 aa).

Over 1–65 (MSRYLKHFTA…SLRKLYSTER (65 aa)) the chain is Cytoplasmic. Residues 66-86 (FQIVVVCLVVLDAIFVLCELL) traverse the membrane as a helical segment. At 87 to 103 (IDLSIIEADHHRIAPQV) the chain is on the extracellular side. A helical membrane pass occupies residues 104–126 (FHYLSLALLTFFMVELAGKIFAY). Topologically, residues 127–134 (RLEFLHHK) are cytoplasmic. The chain crosses the membrane as a helical span at residues 135-155 (FEVFDGIVVVVSFILDIIYIS). Topologically, residues 156–162 (KEDAFDA) are extracellular. Residues 163-183 (MGLLILLRLWRVARIINGILV) traverse the membrane as a helical segment. The Cytoplasmic segment spans residues 184–235 (SVQNRANHRVEKLKEINESLVHQVNELKEQNTKMDQENVRLRALLKDHSIDF). Positions 187–231 (NRANHRVEKLKEINESLVHQVNELKEQNTKMDQENVRLRALLKDH) form a coiled coil.

The protein belongs to the hydrogen channel family. As to quaternary structure, homodimer.

It localises to the membrane. The protein localises to the cell membrane. Mediates the voltage-dependent proton permeability of excitable membranes. Forms a proton-selective channel through which protons may pass in accordance with their electrochemical gradient. In Danio rerio (Zebrafish), this protein is Voltage-gated hydrogen channel 1 (hvcn1).